Here is a 630-residue protein sequence, read N- to C-terminus: Auxin efflux carrier component 2 (630 aa).

The Extracellular segment spans residues 1-6 (MITGRD). The chain crosses the membrane as a helical span at residues 7–27 (IYDVLAAIVPLYVAMFLAYGS). The Cytoplasmic portion of the chain corresponds to 28–38 (VRWWGIFTPDQ). The chain crosses the membrane as a helical span at residues 39-59 (CSGINRFVAVFAVPLLSFHFI). Val-51 contributes to the (indol-3-yl)acetate binding site. At 60–70 (STNDPYSMNYR) the chain is on the extracellular side. A helical transmembrane segment spans residues 71 to 91 (FLAADSLQKLVILAALAVWHN). At 92–108 (LLSRYRRNGGAAASLDW) the chain is on the cytoplasmic side. A helical transmembrane segment spans residues 109-129 (TITLFSLSTLPNTLVMGIPLL). The (indol-3-yl)acetate site is built by Asn-120 and Leu-122. Residues 130–139 (RAMYGDFSGS) lie on the Extracellular side of the membrane. A helical membrane pass occupies residues 140 to 160 (LMVQIVVLQSVIWYTLMLFLF). Tyr-153 is a (indol-3-yl)acetate binding site. Topologically, residues 161–490 (EYRGAKALIS…LIRNPNTYSS (330 aa)) are cytoplasmic. Residues 317–350 (ASGKAADPPSYPAPNPGMMPAPRKKELGGSNSNS) are disordered. Over residues 325–335 (PSYPAPNPGMM) the composition is skewed to pro residues. A helical transmembrane segment spans residues 491–511 (LIGLVWSLVSFRWNIQMPSII). Residues 512 to 514 (KGS) are Extracellular-facing. The helical transmembrane segment at 515–535 (ISILSDAGLGMAMFSLGLFMA) threads the bilayer. Residues 536-549 (LQPKIISCGKTVAT) are Cytoplasmic-facing. The helical transmembrane segment at 550 to 570 (FAMAVRFLTGPAVIAATSIAI) threads the bilayer. Over 571-574 (GLRG) the chain is Extracellular. A helical transmembrane segment spans residues 575–595 (VLLHVAIVQAALPQGIVPFVF). 2 residues coordinate (indol-3-yl)acetate: Ile-590 and Val-591. The Cytoplasmic segment spans residues 596–609 (AKEYNCHPQILSTA). A helical transmembrane segment spans residues 610–630 (VIFGMLIALPITILYYVLLGI).

It belongs to the auxin efflux carrier (TC 2.A.69.1) family. Homodimer. In terms of tissue distribution, expressed in roots, leaves, shoot apex and panicles. Expressed in roots, stem bases and young panicles.

Its subcellular location is the membrane. Acts as a component of the auxin efflux carrier. Involved in the basipetal polar auxin transport which contributes to the spreading growth of the tillers. The polypeptide is Auxin efflux carrier component 2 (Oryza sativa subsp. japonica (Rice)).